A 286-amino-acid polypeptide reads, in one-letter code: MENNKKILESSKKLSSYGDGESRFSFLEKILAPLFLALTAIYFVMLIFPIISMIRYSGGSHIIQTLYDQDNIKTIILSFVTSLIALIFTFIIGTPTAFCINFVRNKVLSKILDIFVEIPVVLPPAVAGIALLLAFGKNGVVGNFLSNHGINVIFTSTAVIIAQFFVSSALYVRVLRDSVKSVPIELFEVSYVLGAGKIETIIKIMIPMLKKSIVSGLILAWIRSLGEFGATLMFAGNIIGKTRTIPLQIYTYMQDDIKMATAFATILYIMTFVLLLLVRLSIRDDD.

The next 6 helical transmembrane spans lie at 34 to 54 (LFLA…ISMI), 75 to 95 (IILS…IGTP), 114 to 134 (IFVE…LLLA), 152 to 172 (VIFT…ALYV), 216 to 236 (GLIL…MFAG), and 257 to 277 (IKMA…LLLL). The 204-residue stretch at 75–278 (IILSFVTSLI…IMTFVLLLLV (204 aa)) folds into the ABC transmembrane type-1 domain.

It belongs to the binding-protein-dependent transport system permease family. CysTW subfamily.

Its subcellular location is the cell membrane. Its function is as follows. May be involved in molybdenum transport. In Clostridium pasteurianum, this protein is Probable transport system permease protein NifC (nifC).